The chain runs to 126 residues: Glycine cleavage system H protein (126 aa).

The 82-residue stretch at 19-100 folds into the Lipoyl-binding domain; sequence DGKIGITDHA…AHAAWMVKVE (82 aa). Lys-60 is subject to N6-lipoyllysine.

It belongs to the GcvH family. As to quaternary structure, the glycine cleavage system is composed of four proteins: P, T, L and H. It depends on (R)-lipoate as a cofactor.

Its function is as follows. The glycine cleavage system catalyzes the degradation of glycine. The H protein shuttles the methylamine group of glycine from the P protein to the T protein. In Koribacter versatilis (strain Ellin345), this protein is Glycine cleavage system H protein.